We begin with the raw amino-acid sequence, 460 residues long: Lysosomal proton-coupled steroid conjugate and bile acid symporter SLC46A3 (460 aa).

Positions Met1 to Ala25 are cleaved as a signal peptide. The Extracellular portion of the chain corresponds to Gln26–Asn73. Residues Asn38, Asn46, and Asn53 are each glycosylated (N-linked (GlcNAc...) asparagine). Residues Leu74–Ser94 form a helical membrane-spanning segment. Over Ser95–Ser111 the chain is Cytoplasmic. Residues Leu112 to Ile132 form a helical membrane-spanning segment. The Extracellular portion of the chain corresponds to Ala133–Thr135. The helical transmembrane segment at Phe136 to Val156 threads the bilayer. Residues Asp157–Ala170 lie on the Cytoplasmic side of the membrane. The chain crosses the membrane as a helical span at residues Ile171–Ile191. Over Arg192–Gly195 the chain is Extracellular. The helical transmembrane segment at Phe196–Phe216 threads the bilayer. The Cytoplasmic segment spans residues Phe217–Gln257. The helical transmembrane segment at Ala258–Ser278 threads the bilayer. The Extracellular segment spans residues Pro279–Ser301. The helical transmembrane segment at Ala302–Leu322 threads the bilayer. The Cytoplasmic segment spans residues Lys323–Asp324. The helical transmembrane segment at Ile325–Thr345 threads the bilayer. The Extracellular segment spans residues Arg346 to Thr347. A helical membrane pass occupies residues Thr348–Leu368. The Cytoplasmic portion of the chain corresponds to Arg369–Gln381. Residues Gly382–Ala402 form a helical membrane-spanning segment. Residues Tyr403–Thr410 are Extracellular-facing. Residues Val411 to Ile431 form a helical membrane-spanning segment. At Ser432 to Asp460 the chain is on the cytoplasmic side. Residues Tyr446–Leu449 carry the Tyrosine-based lysosomal-sorting motif motif.

Belongs to the major facilitator superfamily. SLC46A family. Expressed in liver, kidney, small intestine and colon.

It localises to the lysosome membrane. It catalyses the reaction estrone 3-sulfate(out) + n H(+)(out) = estrone 3-sulfate(in) + n H(+)(in). The catalysed reaction is 25-hydroxyvitamin D3 sulfate(out) + n H(+)(out) = 25-hydroxyvitamin D3 sulfate(in) + n H(+)(in). The enzyme catalyses cholate(out) + n H(+)(out) = cholate(in) + n H(+)(in). It carries out the reaction glycocholate(out) + n H(+)(out) = glycocholate(in) + n H(+)(in). It catalyses the reaction taurocholate(out) + n H(+)(out) = taurocholate(in) + n H(+)(in). The catalysed reaction is dehydroepiandrosterone 3-sulfate(out) + n H(+)(out) = dehydroepiandrosterone 3-sulfate(in) + n H(+)(in). The enzyme catalyses N-acetyl-D-muramoyl-L-alanyl-D-isoglutamine(out) + n H(+)(out) = N-acetyl-D-muramoyl-L-alanyl-D-isoglutamine(in) + n H(+)(in). It carries out the reaction 2',3'-cGAMP(out) + n H(+)(out) = 2',3'-cGAMP(in) + n H(+)(in). Its function is as follows. Lysosomal proton-coupled steroid conjugate and bile acid transporter. Preferentially recognizes lipophilic steroid conjugates or bile acis as endogenous substrates and seems to mediate escape from lysosomes to the cytoplasm. Modulates hepatic cytosolic copper homeostasis, maybe acting as a lysosomal copper transporter and sequestering copper ions in the lysosome. Delivers pathogen-associated molecular patterns to cytosolic pattern recognition receptors as part of the innate immune response to microbes. Selectively transports bacterial muramyl dipeptide (MDP) into the cytosol for recognition by NOD2, triggering inflammatory responses. Likely acts as a redundant importer of cyclic GMP-AMP dinucleotides (cGAMPs) in monocyte and macrophage cell lineages. The transport mechanism, its electrogenicity and stoichiometry remain to be elucidated. The protein is Lysosomal proton-coupled steroid conjugate and bile acid symporter SLC46A3 (Slc46a3) of Mus musculus (Mouse).